We begin with the raw amino-acid sequence, 130 residues long: Protein ApaG (130 aa).

The ApaG domain occupies Lys-3–Arg-127.

The chain is Protein ApaG from Methylobacterium nodulans (strain LMG 21967 / CNCM I-2342 / ORS 2060).